The primary structure comprises 497 residues: MSQAGSSPLYAAIDLGSNSFHMLVVRHIDGSVQTMAKIKRKVRLAAGLDEHNSLSMEAMQRGWDCLSLFAERLQDIPTQNIRIVGTATLRTATNVDVFLEKANQILGQPIEVISGEEEAATIYKGVAHTSGGSGRRLVVDIGGASTELIIGEGFEAKALTSLKMGCVTWLENFFKDRQLNARNFEAAIEGAKQTIKPILEQYTDLGWDVCVGASGTVQALQEIMLAQGMDEVITHSKLKRLQKQAMLADHLEELDIEGLTLERALVFPSGLSILIAIFELLEIDAMTLAGGALREGLVYEMVDELRQNDIRARTICSVQSRYQLDCQYGEQVATLAGKLLEQAGGDEWIAEPQGKVLLETTAKLHEIGLTIDFKKGGEHSAYLLQNLDLPGYTRAQKFFIGEIARRYREQLSSLPEQHAISGTSAKRVLRLLRLAVLLTHRRNPSLEPQVELLAEGDKLTLSIDAKWLEANPLTAAELEIESNRQTDIGWPLTITAC.

It belongs to the GppA/Ppx family. GppA subfamily.

The catalysed reaction is guanosine 3'-diphosphate 5'-triphosphate + H2O = guanosine 3',5'-bis(diphosphate) + phosphate + H(+). It participates in purine metabolism; ppGpp biosynthesis; ppGpp from GTP: step 2/2. Functionally, catalyzes the conversion of pppGpp to ppGpp. Guanosine pentaphosphate (pppGpp) is a cytoplasmic signaling molecule which together with ppGpp controls the 'stringent response', an adaptive process that allows bacteria to respond to amino acid starvation, resulting in the coordinated regulation of numerous cellular activities. This is Guanosine-5'-triphosphate,3'-diphosphate pyrophosphatase from Vibrio parahaemolyticus serotype O3:K6 (strain RIMD 2210633).